A 37-amino-acid polypeptide reads, in one-letter code: Cytochrome b6-f complex subunit 5 (37 aa).

Residues 5-25 (LLSGIILGLIPITICGLFFTA) form a helical membrane-spanning segment.

The protein belongs to the PetG family. As to quaternary structure, the 4 large subunits of the cytochrome b6-f complex are cytochrome b6, subunit IV (17 kDa polypeptide, PetD), cytochrome f and the Rieske protein, while the 4 small subunits are PetG, PetL, PetM and PetN. The complex functions as a dimer.

The protein localises to the plastid. It localises to the chloroplast thylakoid membrane. In terms of biological role, component of the cytochrome b6-f complex, which mediates electron transfer between photosystem II (PSII) and photosystem I (PSI), cyclic electron flow around PSI, and state transitions. PetG is required for either the stability or assembly of the cytochrome b6-f complex. The protein is Cytochrome b6-f complex subunit 5 of Euglena gracilis.